A 576-amino-acid polypeptide reads, in one-letter code: Type II restriction enzyme BsuRI (576 aa).

In terms of assembly, monomer. Requires Mg(2+) as cofactor.

It carries out the reaction Endonucleolytic cleavage of DNA to give specific double-stranded fragments with terminal 5'-phosphates.. In terms of biological role, a P subtype restriction enzyme that recognizes the double-stranded sequence 5'-GGCC-3' and cleaves after G-2. This Bacillus subtilis protein is Type II restriction enzyme BsuRI (hsdRR).